The following is an 87-amino-acid chain: Asparagine--tRNA ligase, cytoplasmic (87 aa).

It belongs to the class-II aminoacyl-tRNA synthetase family.

Its subcellular location is the cytoplasm. The catalysed reaction is tRNA(Asn) + L-asparagine + ATP = L-asparaginyl-tRNA(Asn) + AMP + diphosphate + H(+). The sequence is that of Asparagine--tRNA ligase, cytoplasmic (DED81) from Saccharomyces paradoxus (Yeast).